The primary structure comprises 146 residues: Hemoglobin subunit beta (146 aa).

A Globin domain is found at 2–146; that stretch reads HWTAEEKQLI…VAHALARKYH (145 aa). The heme b site is built by His63 and His92.

The protein belongs to the globin family. As to quaternary structure, heterotetramer of two alpha chains and two beta chains. Red blood cells.

In terms of biological role, involved in oxygen transport from the lung to the various peripheral tissues. This Phalacrocorax carbo (Great cormorant) protein is Hemoglobin subunit beta (HBB).